We begin with the raw amino-acid sequence, 271 residues long: 3-methyl-2-oxobutanoate hydroxymethyltransferase (271 aa).

Mg(2+) is bound by residues Asp-51 and Asp-90. Residues 51-52 (DS), Asp-90, and Lys-119 each bind 3-methyl-2-oxobutanoate. A Mg(2+)-binding site is contributed by Glu-121. Glu-188 acts as the Proton acceptor in catalysis.

The protein belongs to the PanB family. In terms of assembly, homodecamer; pentamer of dimers. It depends on Mg(2+) as a cofactor.

It is found in the cytoplasm. It catalyses the reaction 3-methyl-2-oxobutanoate + (6R)-5,10-methylene-5,6,7,8-tetrahydrofolate + H2O = 2-dehydropantoate + (6S)-5,6,7,8-tetrahydrofolate. It functions in the pathway cofactor biosynthesis; (R)-pantothenate biosynthesis; (R)-pantoate from 3-methyl-2-oxobutanoate: step 1/2. Its function is as follows. Catalyzes the reversible reaction in which hydroxymethyl group from 5,10-methylenetetrahydrofolate is transferred onto alpha-ketoisovalerate to form ketopantoate. The protein is 3-methyl-2-oxobutanoate hydroxymethyltransferase of Azoarcus sp. (strain BH72).